The primary structure comprises 58 residues: Mitochondrial import receptor subunit TOM7 homolog (58 aa).

The Cytoplasmic segment spans residues 1 to 16; it reads MKLSPATKSFIGKTVD. Residues 17-35 form a helical membrane-spanning segment; that stretch reads ISTFAIQWGFVPFVVYLGF. Residues 36-58 are Mitochondrial intermembrane-facing; it reads KKGAEPMPNGQILPLSAMSLLWG.

It belongs to the Tom7 family. Forms part of the preprotein translocase complex of the outer mitochondrial membrane (TOM complex).

It localises to the mitochondrion outer membrane. This Caenorhabditis elegans protein is Mitochondrial import receptor subunit TOM7 homolog (tomm-7).